A 599-amino-acid chain; its full sequence is Translation initiation factor IF-2 (599 aa).

Residues 111–278 (PRPPIITVMG…SILLLAEILE (168 aa)) enclose the tr-type G domain. The tract at residues 120–127 (GHVDHGKT) is G1. A GTP-binding site is contributed by 120 to 127 (GHVDHGKT). The tract at residues 145-149 (GITQH) is G2. A G3 region spans residues 166–169 (DTPG). GTP contacts are provided by residues 166 to 170 (DTPGH) and 220 to 223 (NKMD). Residues 220–223 (NKMD) are G4. Residues 256-258 (SAL) form a G5 region.

The protein belongs to the TRAFAC class translation factor GTPase superfamily. Classic translation factor GTPase family. IF-2 subfamily.

It localises to the cytoplasm. Its function is as follows. One of the essential components for the initiation of protein synthesis. Protects formylmethionyl-tRNA from spontaneous hydrolysis and promotes its binding to the 30S ribosomal subunits. Also involved in the hydrolysis of GTP during the formation of the 70S ribosomal complex. The chain is Translation initiation factor IF-2 from Mesomycoplasma hyopneumoniae (strain 232) (Mycoplasma hyopneumoniae).